The sequence spans 348 residues: Chemokine C-C motif receptor-like 2 (348 aa).

The Extracellular segment spans residues 1–43 (MANYTPAPEDDYDVFIEDDLSDDEIEPCTPYDPKILSAQLVPY). Residues 44–64 (LYTTVFMVGLLDNILVVFILV) form a helical membrane-spanning segment. At 65–76 (KYKGLRQAENMS) the chain is on the cytoplasmic side. The chain crosses the membrane as a helical span at residues 77–97 (FLNLALSNLGFLLTLPFWAYA). Over 98-110 (ASHGEGFDDPLCK) the chain is Extracellular. Cysteines 109 and 187 form a disulfide. The chain crosses the membrane as a helical span at residues 111-131 (ILLLLYSIGLYSEAFFNVLLT). Residues 132 to 150 (VQRYKEFFHVRRRFSACRT) are Cytoplasmic-facing. The chain crosses the membrane as a helical span at residues 151–171 (VAGSIFISVLVWVTATLVTLP). The Extracellular segment spans residues 172-204 (ELVSYKPQMQSQKYKCFFTGLHFLPADETFWKH). A helical membrane pass occupies residues 205–225 (FLTLKMNILGFLLPLFAFVYC). Over 226 to 244 (YVRMRKTLQFRERNYGLFK) the chain is Cytoplasmic. A helical transmembrane segment spans residues 245–265 (LVFTIMAVFLLMWGPYNIVLF). The Extracellular segment spans residues 266–292 (LSAFNEHFSLHGCGSSYNLNKSVQITR). N-linked (GlcNAc...) asparagine glycosylation is present at asparagine 285. Residues 293 to 313 (IIAATHCCVNPLLYVFLDKAF) traverse the membrane as a helical segment. The Cytoplasmic segment spans residues 314–348 (RKHLCHLFYLCSDTAPQPTEEPAQGASGEEYHLSS).

It belongs to the G-protein coupled receptor 1 family.

It localises to the cell membrane. Its function is as follows. Receptor for CCL19 and chemerin/RARRES2. Does not appear to be a signaling receptor, but may have a role in modulating chemokine-triggered immune responses by capturing and internalizing CCL19 or by presenting RARRES2 ligand to CMKLR1, a functional signaling receptor. Plays a critical role for the development of Th2 responses. This Bos taurus (Bovine) protein is Chemokine C-C motif receptor-like 2 (CCRL2).